A 357-amino-acid polypeptide reads, in one-letter code: tRNA N6-adenosine threonylcarbamoyltransferase (357 aa).

Residues histidine 119 and histidine 123 each contribute to the Fe cation site. Residues 141–145, aspartate 174, glycine 187, and asparagine 284 contribute to the substrate site; that span reads LISGG. Residue aspartate 312 coordinates Fe cation.

Belongs to the KAE1 / TsaD family. The cofactor is Fe(2+).

The protein localises to the cytoplasm. The enzyme catalyses L-threonylcarbamoyladenylate + adenosine(37) in tRNA = N(6)-L-threonylcarbamoyladenosine(37) in tRNA + AMP + H(+). Functionally, required for the formation of a threonylcarbamoyl group on adenosine at position 37 (t(6)A37) in tRNAs that read codons beginning with adenine. Is involved in the transfer of the threonylcarbamoyl moiety of threonylcarbamoyl-AMP (TC-AMP) to the N6 group of A37, together with TsaE and TsaB. TsaD likely plays a direct catalytic role in this reaction. The sequence is that of tRNA N6-adenosine threonylcarbamoyltransferase from Pelagibacter ubique (strain HTCC1062).